Here is a 346-residue protein sequence, read N- to C-terminus: N-acetyl-gamma-glutamyl-phosphate reductase (346 aa).

Residue Cys150 is part of the active site.

Belongs to the NAGSA dehydrogenase family. Type 1 subfamily.

It is found in the cytoplasm. It carries out the reaction N-acetyl-L-glutamate 5-semialdehyde + phosphate + NADP(+) = N-acetyl-L-glutamyl 5-phosphate + NADPH + H(+). It functions in the pathway amino-acid biosynthesis; L-arginine biosynthesis; N(2)-acetyl-L-ornithine from L-glutamate: step 3/4. In terms of biological role, catalyzes the NADPH-dependent reduction of N-acetyl-5-glutamyl phosphate to yield N-acetyl-L-glutamate 5-semialdehyde. The sequence is that of N-acetyl-gamma-glutamyl-phosphate reductase from Brevibacillus brevis (strain 47 / JCM 6285 / NBRC 100599).